The primary structure comprises 255 residues: NAD kinase (255 aa).

Asp-44 serves as the catalytic Proton acceptor. Residues 44-45, His-49, 114-115, Asp-144, Ala-152, 155-160, and Gln-216 contribute to the NAD(+) site; these read DG, NE, and SAYNLS.

Belongs to the NAD kinase family. A divalent metal cation serves as cofactor.

Its subcellular location is the cytoplasm. The catalysed reaction is NAD(+) + ATP = ADP + NADP(+) + H(+). Functionally, involved in the regulation of the intracellular balance of NAD and NADP, and is a key enzyme in the biosynthesis of NADP. Catalyzes specifically the phosphorylation on 2'-hydroxyl of the adenosine moiety of NAD to yield NADP. This Rickettsia felis (strain ATCC VR-1525 / URRWXCal2) (Rickettsia azadi) protein is NAD kinase.